The chain runs to 156 residues: 3-dehydroquinate dehydratase (156 aa).

The Proton acceptor role is filled by tyrosine 31. Asparagine 83, histidine 89, and aspartate 96 together coordinate substrate. Histidine 109 functions as the Proton donor in the catalytic mechanism. Substrate-binding positions include leucine 110–serine 111 and arginine 120.

It belongs to the type-II 3-dehydroquinase family. As to quaternary structure, homododecamer.

It catalyses the reaction 3-dehydroquinate = 3-dehydroshikimate + H2O. It functions in the pathway metabolic intermediate biosynthesis; chorismate biosynthesis; chorismate from D-erythrose 4-phosphate and phosphoenolpyruvate: step 3/7. Catalyzes a trans-dehydration via an enolate intermediate. This Chromobacterium violaceum (strain ATCC 12472 / DSM 30191 / JCM 1249 / CCUG 213 / NBRC 12614 / NCIMB 9131 / NCTC 9757 / MK) protein is 3-dehydroquinate dehydratase.